An 879-amino-acid chain; its full sequence is Pyruvate dehydrogenase phosphatase regulatory subunit, mitochondrial (879 aa).

A mitochondrion-targeting transit peptide spans 1 to 27 (MMFYRLLSIVGRQRASPGWQNWSSARN).

This sequence belongs to the GcvT family. As to quaternary structure, heterodimer of a catalytic (PDP1) and a regulatory (PDPR) subunit.

The protein resides in the mitochondrion matrix. Its function is as follows. Decreases the sensitivity of PDP1 to magnesium ions, and this inhibition is reversed by the polyamine spermine. The chain is Pyruvate dehydrogenase phosphatase regulatory subunit, mitochondrial (PDPR) from Homo sapiens (Human).